The chain runs to 637 residues: tRNA 5-methylaminomethyl-2-thiouridine biosynthesis bifunctional protein MnmC (637 aa).

Residues 1 to 232 are tRNA (mnm(5)s(2)U34)-methyltransferase; that stretch reads MPERIEWLED…KRDNLQGEFN (232 aa). An FAD-dependent cmnm(5)s(2)U34 oxidoreductase region spans residues 255–637; the sequence is IGAGLAGAAV…YGEAKLVSED (383 aa).

The protein in the N-terminal section; belongs to the methyltransferase superfamily. tRNA (mnm(5)s(2)U34)-methyltransferase family. It in the C-terminal section; belongs to the DAO family. FAD serves as cofactor.

The protein localises to the cytoplasm. The enzyme catalyses 5-aminomethyl-2-thiouridine(34) in tRNA + S-adenosyl-L-methionine = 5-methylaminomethyl-2-thiouridine(34) in tRNA + S-adenosyl-L-homocysteine + H(+). Its function is as follows. Catalyzes the last two steps in the biosynthesis of 5-methylaminomethyl-2-thiouridine (mnm(5)s(2)U) at the wobble position (U34) in tRNA. Catalyzes the FAD-dependent demodification of cmnm(5)s(2)U34 to nm(5)s(2)U34, followed by the transfer of a methyl group from S-adenosyl-L-methionine to nm(5)s(2)U34, to form mnm(5)s(2)U34. This Polaromonas sp. (strain JS666 / ATCC BAA-500) protein is tRNA 5-methylaminomethyl-2-thiouridine biosynthesis bifunctional protein MnmC.